The primary structure comprises 874 residues: Alanine--tRNA ligase (874 aa).

Residues H564, H568, C665, and H669 each coordinate Zn(2+).

The protein belongs to the class-II aminoacyl-tRNA synthetase family. Requires Zn(2+) as cofactor.

It localises to the cytoplasm. The catalysed reaction is tRNA(Ala) + L-alanine + ATP = L-alanyl-tRNA(Ala) + AMP + diphosphate. Catalyzes the attachment of alanine to tRNA(Ala) in a two-step reaction: alanine is first activated by ATP to form Ala-AMP and then transferred to the acceptor end of tRNA(Ala). Also edits incorrectly charged Ser-tRNA(Ala) and Gly-tRNA(Ala) via its editing domain. This Burkholderia pseudomallei (strain 1106a) protein is Alanine--tRNA ligase.